The chain runs to 249 residues: Basigin (249 aa).

The region spanning 1–82 (AAGTIQTSVN…VGRSNIVVEG (82 aa)) is the Ig-like C2-type domain. At 1 to 187 (AAGTIQTSVN…MTLRVRSRLA (187 aa)) the chain is on the extracellular side. Cystine bridges form between Cys-20-Cys-66 and Cys-105-Cys-165. 3 N-linked (GlcNAc...) asparagine glycosylation sites follow: Asn-23, Asn-132, and Asn-166. An Ig-like V-type domain is found at 84–179 (PRIKVGKKSE…TQGSVQEIMT (96 aa)). The chain crosses the membrane as a helical span at residues 188-208 (ALWPFLGIVAEVLVLVTIIFI). Residues 209–249 (YEKRRKPDQTLDEDDPGAAPLKGSGHHMNDKDKNVRQRNAT) lie on the Cytoplasmic side of the membrane. A disordered region spans residues 216 to 249 (DQTLDEDDPGAAPLKGSGHHMNDKDKNVRQRNAT). Thr-218 carries the post-translational modification Phosphothreonine. Ser-232 is subject to Phosphoserine.

In terms of assembly, homooligomer. Interacts with VEGFA, KDR/VEGFR2, PPIA/CYPA, SLC16A12, SLC16A11, ATP1B2, MAG, L1CAM and AJAP1. Interacts with SLC16A3; interaction mediates SLC16A3 targeting to the plasma membrane. Interacts with SLC16A1; interaction mediates SLC16A1 targeting to the plasma membrane. Interacts with PPIL2; regulates BSG transport to the cell membrane. Interacts with XKR8; promoting its localization at the cell membrane. Interacts with SLC16A6; this interaction mediates targeting to the plasma membrane.

The protein localises to the cell membrane. It localises to the endoplasmic reticulum membrane. The protein resides in the basolateral cell membrane. Signaling receptor for cyclophilins, essential for PPIA/CYPA and PPIB/CYPB-dependent signaling related to chemotaxis and adhesion of immune cells. Plays an important role in targeting the monocarboxylate transporters SLC16A1/GLUT1, SLC16A3, SLC16A8, SLC16A11 and SLC16A12 to the plasma membrane. Acts as a coreceptor for vascular endothelial growth factor receptor 2 (KDR/VEGFR2) in endothelial cells enhancing its VEGFA-mediated activation and downstream signaling. Promotes angiogenesis through EPAS1/HIF2A-mediated up-regulation of VEGFA and KDR/VEGFR2 in endothelial cells. This Cricetulus griseus (Chinese hamster) protein is Basigin (BSG).